Reading from the N-terminus, the 804-residue chain is Elongation factor G, mitochondrial (804 aa).

A mitochondrion-targeting transit peptide spans 1–63; the sequence is MSMHRVARAV…RHFSQSPIIR (63 aa). The tr-type G domain occupies 99–385; that stretch reads RRVRNIGIAA…AVCDYLPNPA (287 aa). Residues 108-115, 183-187, and 237-240 each bind GTP; these read AHIDSGKT, DTPGH, and NKMD.

Belongs to the TRAFAC class translation factor GTPase superfamily. Classic translation factor GTPase family. EF-G/EF-2 subfamily.

The protein localises to the mitochondrion. It participates in protein biosynthesis; polypeptide chain elongation. In terms of biological role, mitochondrial GTPase that catalyzes the GTP-dependent ribosomal translocation step during translation elongation. During this step, the ribosome changes from the pre-translocational (PRE) to the post-translocational (POST) state as the newly formed A-site-bound peptidyl-tRNA and P-site-bound deacylated tRNA move to the P and E sites, respectively. Catalyzes the coordinated movement of the two tRNA molecules, the mRNA and conformational changes in the ribosome. The protein is Elongation factor G, mitochondrial (mef1) of Botryotinia fuckeliana (strain B05.10) (Noble rot fungus).